Here is a 189-residue protein sequence, read N- to C-terminus: UPF0312 protein VIBHAR_05924 (189 aa).

Residues 1-22 (MKKSLFATGLAIAIALPFGANA) form the signal peptide.

Belongs to the UPF0312 family. Type 1 subfamily.

It is found in the periplasm. In Vibrio campbellii (strain ATCC BAA-1116), this protein is UPF0312 protein VIBHAR_05924.